The primary structure comprises 344 residues: GTP 3',8-cyclase (344 aa).

Positions 19 to 245 constitute a Radical SAM core domain; that stretch reads PFGRAVTYLR…DIPYRTGGPA (227 aa). Residue Arg28 coordinates GTP. The [4Fe-4S] cluster site is built by Cys35 and Cys39. S-adenosyl-L-methionine is bound at residue Tyr41. Cys42 is a [4Fe-4S] cluster binding site. Arg77 is a binding site for GTP. Gly81 lines the S-adenosyl-L-methionine pocket. Position 111 (Thr111) interacts with GTP. Residue Ser135 coordinates S-adenosyl-L-methionine. Lys171 serves as a coordination point for GTP. Met205 serves as a coordination point for S-adenosyl-L-methionine. Residues Cys268 and Cys271 each coordinate [4Fe-4S] cluster. 273-275 contacts GTP; it reads RVR. A [4Fe-4S] cluster-binding site is contributed by Cys285.

This sequence belongs to the radical SAM superfamily. MoaA family. As to quaternary structure, monomer and homodimer. It depends on [4Fe-4S] cluster as a cofactor.

It carries out the reaction GTP + AH2 + S-adenosyl-L-methionine = (8S)-3',8-cyclo-7,8-dihydroguanosine 5'-triphosphate + 5'-deoxyadenosine + L-methionine + A + H(+). It functions in the pathway cofactor biosynthesis; molybdopterin biosynthesis. Catalyzes the cyclization of GTP to (8S)-3',8-cyclo-7,8-dihydroguanosine 5'-triphosphate. The chain is GTP 3',8-cyclase from Brucella ovis (strain ATCC 25840 / 63/290 / NCTC 10512).